We begin with the raw amino-acid sequence, 285 residues long: uncharacterized protein (285 aa).

A helical membrane pass occupies residues 6-26 (IKYFSTIIVAVVAVLAGWWLW).

The protein belongs to the membrane fusion protein (MFP) (TC 8.A.1) family.

Its subcellular location is the membrane. This is an uncharacterized protein from Escherichia coli (strain K12).